We begin with the raw amino-acid sequence, 616 residues long: Dihydroxy-acid dehydratase (616 aa).

A Mg(2+)-binding site is contributed by aspartate 81. A [2Fe-2S] cluster-binding site is contributed by cysteine 122. Positions 123 and 124 each coordinate Mg(2+). Position 124 is an N6-carboxylysine (lysine 124). A [2Fe-2S] cluster-binding site is contributed by cysteine 195. Glutamate 491 is a binding site for Mg(2+). Serine 517 (proton acceptor) is an active-site residue.

This sequence belongs to the IlvD/Edd family. Homodimer. It depends on [2Fe-2S] cluster as a cofactor. Mg(2+) serves as cofactor.

The enzyme catalyses (2R)-2,3-dihydroxy-3-methylbutanoate = 3-methyl-2-oxobutanoate + H2O. The catalysed reaction is (2R,3R)-2,3-dihydroxy-3-methylpentanoate = (S)-3-methyl-2-oxopentanoate + H2O. Its pathway is amino-acid biosynthesis; L-isoleucine biosynthesis; L-isoleucine from 2-oxobutanoate: step 3/4. The protein operates within amino-acid biosynthesis; L-valine biosynthesis; L-valine from pyruvate: step 3/4. In terms of biological role, functions in the biosynthesis of branched-chain amino acids. Catalyzes the dehydration of (2R,3R)-2,3-dihydroxy-3-methylpentanoate (2,3-dihydroxy-3-methylvalerate) into 2-oxo-3-methylpentanoate (2-oxo-3-methylvalerate) and of (2R)-2,3-dihydroxy-3-methylbutanoate (2,3-dihydroxyisovalerate) into 2-oxo-3-methylbutanoate (2-oxoisovalerate), the penultimate precursor to L-isoleucine and L-valine, respectively. This Escherichia coli O127:H6 (strain E2348/69 / EPEC) protein is Dihydroxy-acid dehydratase.